The chain runs to 653 residues: Cytidine monophosphate-N-acetylneuraminic acid hydroxylase (653 aa).

The Rieske domain maps to 11-120 (LSPEETSELK…PEYNEDGSLD (110 aa)). The [2Fe-2S] cluster site is built by Cys62, His64, Cys83, and His86. Residues 596–622 (WNPSQATPAVEAKDPSSDSKDSATKPG) form a disordered region. The span at 606–618 (EAKDPSSDSKDSA) shows a compositional bias: basic and acidic residues. The helical transmembrane segment at 630–647 (LLRPLGIVVALVGVGVAI) threads the bilayer.

It belongs to the CMP-Neu5Ac hydroxylase family. [2Fe-2S] cluster serves as cofactor.

Its subcellular location is the membrane. It catalyses the reaction CMP-N-acetyl-beta-neuraminate + 2 Fe(II)-[cytochrome b5] + O2 + 2 H(+) = CMP-N-glycoloyl-beta-neuraminate + 2 Fe(III)-[cytochrome b5] + H2O. Its pathway is amino-sugar metabolism; N-acetylneuraminate metabolism. Functionally, sialic acids are components of carbohydrate chains of glycoconjugates and are involved in cell-cell recognition and cell-pathogen interactions. Catalyzes the conversion of CMP-N-acetylneuraminic acid (CMP-Neu5Ac) into its hydroxylated derivative CMP-N-glycolylneuraminic acid (CMP-Neu5Gc), a sialic acid abundantly expressed at the surface of many cells. This chain is Cytidine monophosphate-N-acetylneuraminic acid hydroxylase (cnh), found in Asterias rubens (Common European starfish).